The chain runs to 299 residues: Syntenin-1 (299 aa).

Serine 2 is subject to N-acetylserine. Residues 2–103 are interaction with PDCD6IP; sequence SLYPSLEDLK…VAPVTGNDAG (102 aa). 3 consecutive short sequence motifs (LYPX(n)L motif) follow at residues 3 to 7, 46 to 50, and 50 to 54; these read LYPSL, LYPKL, and LYPEL. At serine 6 the chain carries Phosphoserine. Tyrosine 47 carries the post-translational modification Phosphotyrosine. 2 consecutive PDZ domains span residues 115–194 and 199–273; these read EVIL…IRDR and TVTM…IMPT. An a 1,2-diacyl-sn-glycero-3-phospho-(1D-myo-inositol-4,5-bisphosphate)-binding site is contributed by 251-252; that stretch reads KD.

In terms of assembly, monomer and homodimer. Interacts with SDC1, SDC2, SDC3, SDC4, NRXN2, EPHA7, EPHB1, NF2 isoform 1, TGFA, IL5RA, NFASC, SDCBP2 and PTPRJ. Interacts with PDCD6IP. Forms a complex with PDCD6IP and SDC2. Interacts (via C-terminus) with TGFBR1. Binds to FZD7; this interaction is increased by inositol trisphosphate (IP3). Interacts with SMO. Phosphorylated on tyrosine residues.

It localises to the cell junction. The protein resides in the focal adhesion. The protein localises to the adherens junction. Its subcellular location is the cell membrane. It is found in the endoplasmic reticulum membrane. It localises to the nucleus. The protein resides in the melanosome. The protein localises to the cytoplasm. Its subcellular location is the cytosol. It is found in the cytoskeleton. It localises to the secreted. The protein resides in the extracellular exosome. The protein localises to the membrane raft. Functionally, multifunctional adapter protein involved in diverse array of functions including trafficking of transmembrane proteins, neuro and immunomodulation, exosome biogenesis, and tumorigenesis. Positively regulates TGFB1-mediated SMAD2/3 activation and TGFB1-induced epithelial-to-mesenchymal transition (EMT) and cell migration in various cell types. May increase TGFB1 signaling by enhancing cell-surface expression of TGFR1 by preventing the interaction between TGFR1 and CAV1 and subsequent CAV1-dependent internalization and degradation of TGFR1. In concert with SDC1/4 and PDCD6IP, regulates exosome biogenesis. Regulates migration, growth, proliferation, and cell cycle progression in a variety of cancer types. In adherens junctions may function to couple syndecans to cytoskeletal proteins or signaling components. Seems to couple transcription factor SOX4 to the IL-5 receptor (IL5RA). May also play a role in vesicular trafficking. Seems to be required for the targeting of TGFA to the cell surface in the early secretory pathway. This Mus musculus (Mouse) protein is Syntenin-1 (Sdcbp).